A 385-amino-acid chain; its full sequence is MGVTLDLARAPAQPLAPSRPNLSGMTRAELAACLVELGVVRPEKAKMRASQLWRWMHHYGVTDFEKMTDVAKETRAALAEVCAISRPQVVERQVSKDGTRKWLIRMAPGIEVETVYIPDVGRAGALCVSSQVGCTLNCTFCHTGTQALVRNLTAAEIVAQVQVARDDLGEWPSPKEDRRLSNIVFMGMGEPLYNLDNVAAAIDIIADNEGIAISRRRITVSTSGVVPELAALGERTQAMLAISLHATNDELREKLVPLNRKYPIAELMAAIRAYPGLSNSKRVTFEYVMLKGVNDSPAEAKALVNLLKGVPAKINLIPFNPWPGSQYECSDWGTIERFAAVLNRAGYASPIRTPRGRDILAACGQLKSESEKLRASARRKLAAGG.

Glu113 (proton acceptor) is an active-site residue. Residues 120 to 352 (VGRAGALCVS…NRAGYASPIR (233 aa)) form the Radical SAM core domain. A disulfide bridge connects residues Cys127 and Cys363. The [4Fe-4S] cluster site is built by Cys134, Cys138, and Cys141. Residues 189-190 (GE), Ser221, 243-245 (SLH), and Asn320 each bind S-adenosyl-L-methionine. Cys363 serves as the catalytic S-methylcysteine intermediate.

This sequence belongs to the radical SAM superfamily. RlmN family. Requires [4Fe-4S] cluster as cofactor.

It localises to the cytoplasm. The enzyme catalyses adenosine(2503) in 23S rRNA + 2 reduced [2Fe-2S]-[ferredoxin] + 2 S-adenosyl-L-methionine = 2-methyladenosine(2503) in 23S rRNA + 5'-deoxyadenosine + L-methionine + 2 oxidized [2Fe-2S]-[ferredoxin] + S-adenosyl-L-homocysteine. It catalyses the reaction adenosine(37) in tRNA + 2 reduced [2Fe-2S]-[ferredoxin] + 2 S-adenosyl-L-methionine = 2-methyladenosine(37) in tRNA + 5'-deoxyadenosine + L-methionine + 2 oxidized [2Fe-2S]-[ferredoxin] + S-adenosyl-L-homocysteine. In terms of biological role, specifically methylates position 2 of adenine 2503 in 23S rRNA and position 2 of adenine 37 in tRNAs. m2A2503 modification seems to play a crucial role in the proofreading step occurring at the peptidyl transferase center and thus would serve to optimize ribosomal fidelity. The sequence is that of Dual-specificity RNA methyltransferase RlmN from Phenylobacterium zucineum (strain HLK1).